Consider the following 457-residue polypeptide: Siroheme synthase (457 aa).

The interval 1-204 (MDHLPIFCQL…QDQQAVEETT (204 aa)) is precorrin-2 dehydrogenase /sirohydrochlorin ferrochelatase. Residues 22 to 23 (DV) and 43 to 44 (LA) contribute to the NAD(+) site. A Phosphoserine modification is found at Ser128. A uroporphyrinogen-III C-methyltransferase region spans residues 216–457 (GEVVLVGAGP…REKLNWFSNH (242 aa)). Residue Pro225 coordinates S-adenosyl-L-methionine. Asp248 (proton acceptor) is an active-site residue. Lys270 (proton donor) is an active-site residue. S-adenosyl-L-methionine-binding positions include 301-303 (GGD), Ile306, 331-332 (TA), Met382, and Gly411.

In the N-terminal section; belongs to the precorrin-2 dehydrogenase / sirohydrochlorin ferrochelatase family. The protein in the C-terminal section; belongs to the precorrin methyltransferase family.

The catalysed reaction is uroporphyrinogen III + 2 S-adenosyl-L-methionine = precorrin-2 + 2 S-adenosyl-L-homocysteine + H(+). It catalyses the reaction precorrin-2 + NAD(+) = sirohydrochlorin + NADH + 2 H(+). The enzyme catalyses siroheme + 2 H(+) = sirohydrochlorin + Fe(2+). It participates in cofactor biosynthesis; adenosylcobalamin biosynthesis; precorrin-2 from uroporphyrinogen III: step 1/1. Its pathway is cofactor biosynthesis; adenosylcobalamin biosynthesis; sirohydrochlorin from precorrin-2: step 1/1. The protein operates within porphyrin-containing compound metabolism; siroheme biosynthesis; precorrin-2 from uroporphyrinogen III: step 1/1. It functions in the pathway porphyrin-containing compound metabolism; siroheme biosynthesis; siroheme from sirohydrochlorin: step 1/1. It participates in porphyrin-containing compound metabolism; siroheme biosynthesis; sirohydrochlorin from precorrin-2: step 1/1. Functionally, multifunctional enzyme that catalyzes the SAM-dependent methylations of uroporphyrinogen III at position C-2 and C-7 to form precorrin-2 via precorrin-1. Then it catalyzes the NAD-dependent ring dehydrogenation of precorrin-2 to yield sirohydrochlorin. Finally, it catalyzes the ferrochelation of sirohydrochlorin to yield siroheme. This chain is Siroheme synthase, found in Enterobacter sp. (strain 638).